A 21-amino-acid chain; its full sequence is 71 kDa F-actin-binding protein (21 aa).

This sequence to yeast fimbrin. In terms of processing, the N-terminus is blocked.

Its function is as follows. Binds directly to F-actin and induces actin filament bundling. May function as a regulator of actin filament organization. The sequence is that of 71 kDa F-actin-binding protein from Tetrahymena pyriformis.